We begin with the raw amino-acid sequence, 345 residues long: Growth hormone-inducible transmembrane protein (345 aa).

The transit peptide at 1–45 (MLAARLVCLRTLPSRVFHPAFTKASPVVKNSITKNQWLLTPSREY) directs the protein to the mitochondrion. Residues 46-82 (ATKTRIGIRRGRTGQELKEAALEPSMEKIFKIDQMGR) are Mitochondrial matrix-facing. Residues 83-103 (WFVAGGAAVGLGALCYYGLGL) traverse the membrane as a helical segment. Residues 104-125 (SNEIGAIEKAVIWPQYVKDRIH) lie on the Mitochondrial intermembrane side of the membrane. Residues 126-146 (STYMYLAGSIGLTALSAIAIS) traverse the membrane as a helical segment. Residues 147-159 (RTPVLMNFMMRGS) lie on the Mitochondrial matrix side of the membrane. The helical transmembrane segment at 160-180 (WVTIGVTFAAMVGAGMLVRSI) threads the bilayer. Topologically, residues 181-190 (PYDQSPGPKH) are mitochondrial intermembrane. The helical transmembrane segment at 191 to 211 (LAWLLHSGVMGAVVAPLTILG) threads the bilayer. Residues 212 to 213 (GP) are Mitochondrial matrix-facing. A helical membrane pass occupies residues 214-234 (LLIRAAWYTAGIVGGLSTVAM). Over 235–244 (CAPSEKFLNM) the chain is Mitochondrial intermembrane. A helical membrane pass occupies residues 245 to 265 (GAPLGVGLGLVFVSSLGSMFL). At 266 to 271 (PPTTVA) the chain is on the mitochondrial matrix side. The helical transmembrane segment at 272–292 (GATLYSVAMYGGLVLFSMFLL) threads the bilayer. Residues 293–345 (YDTQKVIKRAEVSPMYGVQKYDPINSMLSIYMDTLNIFMRVATMLATGGNRKK) lie on the Mitochondrial intermembrane side of the membrane.

Belongs to the BI1 family. As to quaternary structure, interacts with LETM1. Interacts with AFG3L2. Post-translationally, undergoes AFG3L2-mediated proteolytic degradation, upon hyperpolarization of mitochondria.

The protein localises to the mitochondrion inner membrane. It catalyses the reaction Ca(2+)(in) + 2 H(+)(out) = Ca(2+)(out) + 2 H(+)(in). The catalysed reaction is K(+)(in) + H(+)(out) = K(+)(out) + H(+)(in). Functionally, plays an important role in maintenance of mitochondrial morphology and in mediating either calcium or potassium/proton antiport. Mediates proton-dependent calcium efflux from mitochondrion. Also functions as an electroneutral mitochondrial proton/potassium exchanger. Required for the mitochondrial tubular network and cristae organization. Involved in apoptotic release of cytochrome c. Inhibits the proteolytic activity of AFG3L2, stimulating respiration and stabilizing respiratory enzymes in actively respiring mitochondria. However, when mitochondria become hyperpolarized, GHITM loses its inhibitory activity toward AFG3L2 and the now the active AFG3L2 turns first on GHITM and, if hyperpolarization persists, on other proteins of the mitochondria, leading to a broad remodeling of the mitochondrial proteome. This is Growth hormone-inducible transmembrane protein (GHITM) from Homo sapiens (Human).